Here is a 1084-residue protein sequence, read N- to C-terminus: Cellulose synthase A catalytic subunit 2 [UDP-forming] (1084 aa).

Met1 bears the N-acetylmethionine mark. Over 1–278 (MNTGGRLIAG…RSSRINPYRM (278 aa)) the chain is Cytoplasmic. Zn(2+)-binding residues include Cys39, Cys42, Cys58, Cys61, Cys66, Cys69, Cys81, and Cys84. The RING-type; degenerate zinc-finger motif lies at 39–85 (CQICGDEIELTVSSELFVACNECAFPVCRPCYEYERREGNQACPQCK). The tract at residues 230 to 259 (IKHEGGNNGRGSNDDDELDDPDMPMMDEGR) is disordered. Residues 279 to 299 (LILCRLAILGLFFHYRILHPV) form a helical membrane-spanning segment. The Extracellular segment spans residues 300–301 (ND). Residues 302-322 (AYGLWLTSVICEIWFAVSWIL) form a helical membrane-spanning segment. Over 323-867 (DQFPKWYPIE…INSVVYPWTS (545 aa)) the chain is Cytoplasmic. Residues Ser361, Lys367, Glu368, and Asp397 each coordinate UDP-alpha-D-glucose. Asp397 is a catalytic residue. Residues 451 to 477 (VRERRAMKRDYEEFKVKINALVATAQK) adopt a coiled-coil conformation. Lys538 serves as a coordination point for UDP-alpha-D-glucose. Lys539 and Asp563 together coordinate Mn(2+). The active site involves Asp784. Residues 868–888 (LPLIVYCSLPAVCLLTGKFIV) traverse the membrane as a helical segment. Topologically, residues 889–893 (PEISN) are extracellular. A helical membrane pass occupies residues 894–914 (YAGILFMLMFISIAVTGILEM). The Cytoplasmic segment spans residues 915-929 (QWGGVGIDDWWRNEQ). The helical transmembrane segment at 930–950 (FWVIGGASSHLFALFQGLLKV) threads the bilayer. At 951-979 (LAGVNTNFTVTSKAADDGAFSELYIFKWT) the chain is on the extracellular side. N-linked (GlcNAc...) asparagine glycosylation occurs at Asn957. The chain crosses the membrane as a helical span at residues 980–1000 (TLLIPPTTLLIINIIGVIVGV). Residues 1001-1011 (SDAISNGYDSW) lie on the Cytoplasmic side of the membrane. A helical membrane pass occupies residues 1012 to 1032 (GPLFGRLFFALWVIVHLYPFL). Residues 1033–1041 (KGMLGKQDK) are Extracellular-facing. Residues 1042-1062 (MPTIIVVWSILLASILTLLWV) traverse the membrane as a helical segment. At 1063 to 1084 (RVNPFVAKGGPVLEICGLNCGN) the chain is on the cytoplasmic side.

Belongs to the glycosyltransferase 2 family. Plant cellulose synthase subfamily. In terms of assembly, homodimer. Interaction through zinc finger domain. Mn(2+) serves as cofactor. The cofactor is Zn(2+). Strongly and ubiquitously expressed. Localized in some dividing and expanding cells, as well as in vascular tissues.

The protein resides in the cell membrane. The catalysed reaction is [(1-&gt;4)-beta-D-glucosyl](n) + UDP-alpha-D-glucose = [(1-&gt;4)-beta-D-glucosyl](n+1) + UDP + H(+). It functions in the pathway glycan metabolism; plant cellulose biosynthesis. In terms of biological role, catalytic subunit of cellulose synthase terminal complexes ('rosettes'), required for beta-1,4-glucan microfibril crystallization, a major mechanism of the cell wall formation. Involved in the primary cell wall formation. The polypeptide is Cellulose synthase A catalytic subunit 2 [UDP-forming] (Arabidopsis thaliana (Mouse-ear cress)).